The primary structure comprises 39 residues: Photosystem II reaction center protein Psb30 (39 aa).

A helical membrane pass occupies residues 12 to 32 (IFQLTFVALIMLAGPFVIFLL).

Belongs to the Psb30/Ycf12 family. PSII is composed of 1 copy each of membrane proteins PsbA, PsbB, PsbC, PsbD, PsbE, PsbF, PsbH, PsbI, PsbJ, PsbK, PsbL, PsbM, PsbT, PsbX, PsbY, PsbZ, Psb30/Ycf12, peripheral proteins PsbO, CyanoQ (PsbQ), PsbU, PsbV and a large number of cofactors. It forms dimeric complexes.

The protein localises to the cellular thylakoid membrane. Functionally, a core subunit of photosystem II (PSII), probably helps stabilize the reaction center. The polypeptide is Photosystem II reaction center protein Psb30 (Microcystis aeruginosa (strain NIES-843 / IAM M-2473)).